The primary structure comprises 115 residues: U3-lycotoxin-Ls1a (115 aa).

A signal peptide spans 1–20 (MKFVLLFGVLLVTFFSYSSA). A propeptide spanning residues 21–44 (EMLDDFDQADEDELLSLIEKGEAR) is cleaved from the precursor. Disulfide bonds link Cys-48–Cys-63, Cys-55–Cys-72, Cys-62–Cys-87, and Cys-74–Cys-85.

Belongs to the neurotoxin 19 (CSTX) family. 01 subfamily. Expressed by the venom gland.

It is found in the secreted. This chain is U3-lycotoxin-Ls1a, found in Lycosa singoriensis (Wolf spider).